A 389-amino-acid polypeptide reads, in one-letter code: Phospho-N-acetylmuramoyl-pentapeptide-transferase (389 aa).

The next 10 helical transmembrane spans lie at Arg25 to Ile45, Thr73 to Leu93, Phe97 to Tyr117, Phe135 to Ala155, Ile190 to Ala210, Gly222 to Met242, Ala259 to Phe279, Phe287 to Val307, Ile311 to Val331, and Gln366 to Leu386.

This sequence belongs to the glycosyltransferase 4 family. MraY subfamily. It depends on Mg(2+) as a cofactor.

Its subcellular location is the cell inner membrane. It catalyses the reaction UDP-N-acetyl-alpha-D-muramoyl-L-alanyl-gamma-D-glutamyl-meso-2,6-diaminopimeloyl-D-alanyl-D-alanine + di-trans,octa-cis-undecaprenyl phosphate = di-trans,octa-cis-undecaprenyl diphospho-N-acetyl-alpha-D-muramoyl-L-alanyl-D-glutamyl-meso-2,6-diaminopimeloyl-D-alanyl-D-alanine + UMP. It participates in cell wall biogenesis; peptidoglycan biosynthesis. In terms of biological role, catalyzes the initial step of the lipid cycle reactions in the biosynthesis of the cell wall peptidoglycan: transfers peptidoglycan precursor phospho-MurNAc-pentapeptide from UDP-MurNAc-pentapeptide onto the lipid carrier undecaprenyl phosphate, yielding undecaprenyl-pyrophosphoryl-MurNAc-pentapeptide, known as lipid I. This Paraburkholderia xenovorans (strain LB400) protein is Phospho-N-acetylmuramoyl-pentapeptide-transferase.